The following is a 223-amino-acid chain: Uracil-DNA glycosylase (223 aa).

The Proton acceptor role is filled by Asp67.

Belongs to the uracil-DNA glycosylase (UDG) superfamily. UNG family.

The protein resides in the cytoplasm. The enzyme catalyses Hydrolyzes single-stranded DNA or mismatched double-stranded DNA and polynucleotides, releasing free uracil.. Functionally, excises uracil residues from the DNA which can arise as a result of misincorporation of dUMP residues by DNA polymerase or due to deamination of cytosine. This chain is Uracil-DNA glycosylase, found in Borrelia turicatae (strain 91E135).